The sequence spans 459 residues: Bifunctional protein GlmU (459 aa).

The segment at 1-230 is pyrophosphorylase; the sequence is MSNRFAVILA…FDETLGVNDR (230 aa). Residues 9 to 12, Lys-23, Gln-73, and 78 to 79 each bind UDP-N-acetyl-alpha-D-glucosamine; these read LAAG and GT. Asp-103 contributes to the Mg(2+) binding site. The UDP-N-acetyl-alpha-D-glucosamine site is built by Gly-140, Glu-155, Asn-170, and Asn-228. A Mg(2+)-binding site is contributed by Asn-228. Residues 231–251 are linker; sequence VALSQAEIIMKNRINRKNMVN. The tract at residues 252–459 is N-acetyltransferase; the sequence is GVTIIDPSNT…VDQLLNKKKS (208 aa). Residues Arg-333 and Lys-351 each coordinate UDP-N-acetyl-alpha-D-glucosamine. Catalysis depends on His-363, which acts as the Proton acceptor. UDP-N-acetyl-alpha-D-glucosamine is bound by residues Tyr-366 and Asn-377. Acetyl-CoA contacts are provided by residues 386-387, Ala-423, and Arg-440; that span reads NY.

In the N-terminal section; belongs to the N-acetylglucosamine-1-phosphate uridyltransferase family. This sequence in the C-terminal section; belongs to the transferase hexapeptide repeat family. Homotrimer. It depends on Mg(2+) as a cofactor.

It localises to the cytoplasm. It carries out the reaction alpha-D-glucosamine 1-phosphate + acetyl-CoA = N-acetyl-alpha-D-glucosamine 1-phosphate + CoA + H(+). The enzyme catalyses N-acetyl-alpha-D-glucosamine 1-phosphate + UTP + H(+) = UDP-N-acetyl-alpha-D-glucosamine + diphosphate. The protein operates within nucleotide-sugar biosynthesis; UDP-N-acetyl-alpha-D-glucosamine biosynthesis; N-acetyl-alpha-D-glucosamine 1-phosphate from alpha-D-glucosamine 6-phosphate (route II): step 2/2. Its pathway is nucleotide-sugar biosynthesis; UDP-N-acetyl-alpha-D-glucosamine biosynthesis; UDP-N-acetyl-alpha-D-glucosamine from N-acetyl-alpha-D-glucosamine 1-phosphate: step 1/1. It participates in bacterial outer membrane biogenesis; LPS lipid A biosynthesis. Catalyzes the last two sequential reactions in the de novo biosynthetic pathway for UDP-N-acetylglucosamine (UDP-GlcNAc). The C-terminal domain catalyzes the transfer of acetyl group from acetyl coenzyme A to glucosamine-1-phosphate (GlcN-1-P) to produce N-acetylglucosamine-1-phosphate (GlcNAc-1-P), which is converted into UDP-GlcNAc by the transfer of uridine 5-monophosphate (from uridine 5-triphosphate), a reaction catalyzed by the N-terminal domain. The chain is Bifunctional protein GlmU from Bacillus cereus (strain G9842).